A 1188-amino-acid polypeptide reads, in one-letter code: Adenomatous polyposis coli protein-related protein 1 (1188 aa).

Residues 1 to 50 (MSSSSSDENETTIHRTGSNTGGSGIYSQPRAGSSKRTSNVRHDVSDVDDE) form a disordered region. The interval 1–486 (MSSSSSDENE…LSLRATRASP (486 aa)) is required for interaction with bar-1 and hmp-2. The ARM repeat unit spans residues 314–358 (NCLKVLASLLSPDARFTSLVDSATGILKYVSQYLANTSTHLELRS). A compositionally biased stretch (low complexity) spans 579-588 (IQQQQQMQKA). Disordered stretches follow at residues 579-624 (IQQQ…SMNP), 670-702 (TESE…DGAT), 726-751 (TPNG…GPSL), 778-952 (QSEM…TMRF), 1003-1092 (CSMI…LKDK), and 1157-1181 (YQKP…PNPK). Residues 600–1188 (DLDIPTSTVM…NPKQMLVTIV (589 aa)) are required for interaction with pry-1. Polar residues-rich tracts occupy residues 604-624 (PTST…SMNP) and 677-701 (LTSQ…SDGA). Polar residues-rich tracts occupy residues 778-788 (QSEMPTSSSTP) and 800-811 (FSPTQKTTSSPA). Basic and acidic residues-rich tracts occupy residues 832 to 843 (RRQDASDADRLL) and 871 to 900 (EPER…DHNG). Polar residues-rich tracts occupy residues 909–929 (WSPQ…SSED), 937–946 (EPNSSTSGAA), 1014–1039 (QRNE…SASS), and 1164–1180 (GRNN…TPNP).

It belongs to the adenomatous polyposis coli (APC) family. Interacts (via N-terminus) with bar-1 and hmp-2; the interaction with hmp-2 is relatively weak. Interacts (via C-terminus) with pry-1 (via N-terminus). Probably associates with bar-1, gsk-3, pry-1 in a complex. In terms of tissue distribution, during the L1 stage, expressed in vulval precursor cells (P3-8.p), seam cells and excretory cells.

It localises to the cell junction. The protein resides in the adherens junction. The protein localises to the cytoplasm. Its subcellular location is the nucleus. In terms of biological role, has a role in endoderm cell specification and pharyngeal development. Required for the migration of epithelial cells, organization of the anterior seam cells and ceh-13 expression during embryo morphogenesis. Prevents hyperactivation of the Wnt signaling pathway during endoderm development, probably by preventing hmp-2 nuclear translocation. During larval development, apr-1 is required for expression of lin-39 in P3-8.p. Shown to negatively regulate Wnt signaling in vulval precursor cells. Has a role in cell division by establishing the polarity of the mother cell which forms the asymmetries of the daughter nuclei. During the L4 larval stage, it is required for the asymmetric division and self-renewal of seam cells. Thought to regulate export of wrm-1 from the nucleus possibly as part of a complex involving pry-1. This Caenorhabditis elegans protein is Adenomatous polyposis coli protein-related protein 1.